The primary structure comprises 246 residues: uncharacterized protein (246 aa).

10–34 (VITGASSGIGEETVNLLSENGAKLV) provides a ligand contact to NADP(+). Position 140 (Ser140) interacts with substrate. Tyr153 acts as the Proton acceptor in catalysis.

The protein belongs to the short-chain dehydrogenases/reductases (SDR) family.

This is an uncharacterized protein from Staphylococcus saprophyticus subsp. saprophyticus (strain ATCC 15305 / DSM 20229 / NCIMB 8711 / NCTC 7292 / S-41).